Here is a 281-residue protein sequence, read N- to C-terminus: MTSKKERLDVLLVERGLAETREKAKRAIMAGIVYSNENRLDKPGEKIDRDLPLTVKGNPLRYVSRGGLKLEKALKEFPVSVKDKIMIDIGSSTGGFTDCALQNGAKQSYAVDVGYNQLAWKLRQDERVVVMERTNFRYATPADFTKGMPEFATIDVSFISLRLILPVLRTLLVPGSDCMALVKPQFEAGRESVGKKGIVRDPKVHADVLKRMISFSAAEGYICKGLSFSPITGGDGNIEFLLHLHWPGEGQEGQELPEEEIMRVVEEAHKTLKEKKADVPE.

An S4 RNA-binding domain is found at 6–67; that stretch reads ERLDVLLVER…NPLRYVSRGG (62 aa).

Belongs to the TlyA family.

This Bacillus subtilis (strain 168) protein is Putative rRNA methyltransferase YqxC (yqxC).